The sequence spans 538 residues: MFS-type transporter tndD (538 aa).

The interval 1–42 (MSLSGSDSHLAVSPTLAEDMNSSDTSAGLAETPPADEEKRSI) is disordered. 2 N-linked (GlcNAc...) asparagine glycosylation sites follow: Asn21 and Asn71. The next 11 helical transmembrane spans lie at 81 to 101 (VGIV…FAPG), 115 to 135 (LLAG…PLIL), 153 to 173 (ICFT…MLIA), 203 to 223 (GGVI…GPVA), 235 to 255 (WVFW…FLFL), 309 to 329 (PIVA…YLMF), 348 to 368 (GLTF…IGAV), 394 to 414 (LPPL…YGWS), 422 to 442 (IVPI…FMCI), 444 to 464 (SYLV…NTVV), and 485 to 505 (LGWG…IPWA).

This sequence belongs to the major facilitator superfamily.

The protein localises to the membrane. In terms of biological role, MFS-type transporter; part of the gene cluster that mediates the biosynthesis of talaronoid C, a fusicoccane diterpenoid with an unprecedented tricyclic 5/8/6 ring system. The sequence is that of MFS-type transporter tndD from Aspergillus flavipes.